The primary structure comprises 230 residues: Extracellular deoxyribonuclease (230 aa).

A signal peptide spans 1–20 (MFRPLLSLCLALLVSAPAHA).

Belongs to the EndA/NucM nuclease family.

Its subcellular location is the secreted. The polypeptide is Extracellular deoxyribonuclease (dns) (Aeromonas hydrophila).